The chain runs to 57 residues: uncharacterized protein (57 aa).

The protein localises to the plastid. This is an uncharacterized protein from Euglena longa (Euglenophycean alga).